We begin with the raw amino-acid sequence, 427 residues long: Adenylosuccinate synthetase (427 aa).

GTP contacts are provided by residues 12–18 and 40–42; these read GDEGKGK and GHT. The active-site Proton acceptor is the Asp13. Residues Asp13 and Gly40 each coordinate Mg(2+). IMP contacts are provided by residues 13 to 16, 38 to 41, Thr128, Arg142, Gln223, Thr238, and Arg302; these read DEGK and NAGH. The active-site Proton donor is His41. Substrate is bound at residue 298-304; sequence TTTGRPR. GTP contacts are provided by residues Arg304, 330-332, and 412-414; these read SID and SVG.

It belongs to the adenylosuccinate synthetase family. As to quaternary structure, homodimer. Requires Mg(2+) as cofactor.

It localises to the cytoplasm. It catalyses the reaction IMP + L-aspartate + GTP = N(6)-(1,2-dicarboxyethyl)-AMP + GDP + phosphate + 2 H(+). Its pathway is purine metabolism; AMP biosynthesis via de novo pathway; AMP from IMP: step 1/2. Its function is as follows. Plays an important role in the de novo pathway of purine nucleotide biosynthesis. Catalyzes the first committed step in the biosynthesis of AMP from IMP. This Staphylococcus saprophyticus subsp. saprophyticus (strain ATCC 15305 / DSM 20229 / NCIMB 8711 / NCTC 7292 / S-41) protein is Adenylosuccinate synthetase.